The chain runs to 303 residues: Pseudouridine-5'-phosphate glycosidase (303 aa).

Residue Glu-23 is the Proton donor of the active site. The substrate site is built by Lys-85 and Val-105. Residue Asp-137 coordinates Mn(2+). 139–141 (SQD) provides a ligand contact to substrate. Lys-158 functions as the Nucleophile in the catalytic mechanism.

Belongs to the pseudouridine-5'-phosphate glycosidase family. In terms of assembly, homotrimer. Mn(2+) is required as a cofactor.

The enzyme catalyses D-ribose 5-phosphate + uracil = psi-UMP + H2O. Functionally, catalyzes the reversible cleavage of pseudouridine 5'-phosphate (PsiMP) to ribose 5-phosphate and uracil. Functions biologically in the cleavage direction, as part of a pseudouridine degradation pathway. The sequence is that of Pseudouridine-5'-phosphate glycosidase from Myxococcus xanthus (strain DK1622).